Reading from the N-terminus, the 557-residue chain is Glypican-4 (557 aa).

The first 18 residues, M1–A18, serve as a signal peptide directing secretion. Phosphoserine is present on S357. 3 O-linked (Xyl...) (glycosaminoglycan) serine glycosylation sites follow: S494, S498, and S500. N514 carries an N-linked (GlcNAc...) asparagine glycan. S529 carries GPI-anchor amidated serine lipidation. The propeptide at A530–R557 is removed in mature form.

It belongs to the glypican family. In terms of tissue distribution, highly expressed in developing brain and kidney.

The protein localises to the cell membrane. It localises to the secreted. It is found in the extracellular space. Functionally, cell surface proteoglycan that bears heparan sulfate. May be involved in the development of kidney tubules and of the central nervous system. The sequence is that of Glypican-4 (Gpc4) from Mus musculus (Mouse).